We begin with the raw amino-acid sequence, 30 residues long: Cytochrome b6/f complex 12.6 kDa peptide (30 aa).

The segment at 1–30 is disordered; the sequence is SGSGVRSAKKGGKAQGGQAGVGYKGSTEPG. The segment covering 13 to 23 has biased composition (gly residues); that stretch reads KAQGGQAGVGY.

The protein localises to the plastid. It is found in the chloroplast. Its function is as follows. May be a component of the cytochrome b6/f complex which is part of the photosynthetic respiratory chain. This is Cytochrome b6/f complex 12.6 kDa peptide from Euglena gracilis.